A 393-amino-acid chain; its full sequence is Putative mitochondrial cysteine synthase (393 aa).

The chain crosses the membrane as a helical span at residues 12–31 (LAWRECISIASVLIGAYASY). Position 86 is an N6-(pyridoxal phosphate)lysine (K86). Residues 230 to 234 (GTGGT) and S338 each bind pyridoxal 5'-phosphate.

It belongs to the cysteine synthase/cystathionine beta-synthase family. Pyridoxal 5'-phosphate is required as a cofactor.

The protein resides in the mitochondrion. It localises to the mitochondrion outer membrane. It catalyses the reaction O-acetyl-L-serine + hydrogen sulfide = L-cysteine + acetate. Functionally, putative cysteine synthase that catalyzes the conversion of O-acetyl-L-serine (OAS) into cysteine, the last step in the cysteine biosynthesis pathway. However, this CS-like protein is unlikely to function in cysteine biosynthesis. It seems that in S.cerevisiae cysteine biosynthesis occurs exclusively through the cystathionine pathway and not via direct incorporation of sulfur into OAS. The protein is Putative mitochondrial cysteine synthase of Saccharomyces cerevisiae (strain ATCC 204508 / S288c) (Baker's yeast).